Reading from the N-terminus, the 78-residue chain is uncharacterized protein (78 aa).

The disordered stretch occupies residues 1 to 28; that stretch reads MGGGNAQKSAMARAKNLEKAKAAGKGSQ.

This is an uncharacterized protein from Arabidopsis thaliana (Mouse-ear cress).